Here is a 260-residue protein sequence, read N- to C-terminus: 3beta-hydroxysteroid dehydrogenase 2 (260 aa).

Residues Asp-43, 69–70, Asn-96, Tyr-163, and Lys-167 each bind NAD(+); that span reads DV. Tyr-163 functions as the Proton acceptor in the catalytic mechanism.

This sequence belongs to the short-chain dehydrogenases/reductases (SDR) family.

The catalysed reaction is 3-oxo-5beta-cholan-24-oate + NADH + H(+) = isolithocholate + NAD(+). It carries out the reaction 12alpha-hydroxy-3-oxo-5beta-cholan-24-oate + NADH + H(+) = isodeoxycholate + NAD(+). It catalyses the reaction 12alpha-hydroxy-3-oxo-5beta-cholan-24-oate + NADPH + H(+) = isodeoxycholate + NADP(+). The enzyme catalyses 7alpha,12alpha-dihydroxy-3-oxo-5beta-cholan-24-oate + NADH + H(+) = isocholate + NAD(+). The catalysed reaction is 3-oxochenodeoxycholate + NADH + H(+) = isochenodeoxycholate + NAD(+). Functionally, involved in the modification of secondary bile acids into iso-bile acids (3beta-bile acids) via epimerization of the 3-OH group through a 3-oxo-intermediate. Catalyzes the reduction of 12-alpha-hydroxy-3-oxo-5-beta-cholan-24-oate (3-oxo-DCA) and 3-oxo-5-beta-cholan-24-oate (3-oxo-LCA) to yield isodeoxycholate (isoDCA) and isolithocholate (isoLCA), respectively. Is also able to catalyze the reduction of 3-dehydrocholate (3-oxo-CA or 7alpha,12alpha-dihydroxy-3-oxo-5beta-cholan-24-oate) and 7-alpha-hydroxy-3-oxo-5-beta-cholan-24-oate (3-oxo-CDCA), into isocholate (isoCA) and isochenodeoxycholate (isoCDCA), respectively. Accepts both NADH and NADPH as cosubstrates. The conversion of the abundant bile acid deoxycholate (DCA) into isoDCA by the gut bacterium E.lenta favors the growth of the keystone commensal genus Bacteroides, since isoDCA is less cytotoxic than its parent compound, DCA; iso-bile acids have thus a potential role in modulating gut community composition. This chain is 3beta-hydroxysteroid dehydrogenase 2, found in Eggerthella lenta (strain ATCC 25559 / DSM 2243 / CCUG 17323 / JCM 9979 / KCTC 3265 / NCTC 11813 / VPI 0255 / 1899 B) (Eubacterium lentum).